Consider the following 290-residue polypeptide: MNFKLKNLRLSRLNQEKSSSVTSFFFIQELFVLVKRLFIQLKRRPITLISGILQPLLWLILFGALFQKAPFRISNLENNYLQFFYPGILVFTAFAGSLNSSLPLIFDREFGFLNRLLVAPLNSRFSILFSSAFFISVLSFIQVFFIMLFGVFLGIQLPPFKSLIVSFFFLFLLIIGITTFSILLALLLPTHIELIAVIFVLNLPLLFSSTALAPLDFMPSWLQIISCLNPLTYTIEPIRFLYSHSSWLFSSSLFELSFFSINIGQSLIILIIFDLVGFLLFKKILKSIFI.

7 helical membrane-spanning segments follow: residues 21–41 (VTSFFFIQELFVLVKRLFIQL), 46–66 (ITLISGILQPLLWLILFGALF), 86–106 (PGILVFTAFAGSLNSSLPLIF), 133–153 (FFISVLSFIQVFFIMLFGVFL), 167–187 (FFFLFLLIIGITTFSILLALL), 194–213 (LIAVIFVLNLPLLFSSTALA), and 261–281 (INIGQSLIILIIFDLVGFLLF). An ABC transmembrane type-2 domain is found at 46 to 284 (ITLISGILQP…LVGFLLFKKI (239 aa)).

It belongs to the ABC-2 integral membrane protein family.

The protein resides in the plastid. Its subcellular location is the cyanelle membrane. This Cyanophora paradoxa protein is Putative transport permease ycf38 (ycf38).